The primary structure comprises 732 residues: 1,4-alpha-glucan branching enzyme GlgB (732 aa).

D409 acts as the Nucleophile in catalysis. E462 functions as the Proton donor in the catalytic mechanism.

Belongs to the glycosyl hydrolase 13 family. GlgB subfamily. Monomer.

It catalyses the reaction Transfers a segment of a (1-&gt;4)-alpha-D-glucan chain to a primary hydroxy group in a similar glucan chain.. The protein operates within glycan biosynthesis; glycogen biosynthesis. Its function is as follows. Catalyzes the formation of the alpha-1,6-glucosidic linkages in glycogen by scission of a 1,4-alpha-linked oligosaccharide from growing alpha-1,4-glucan chains and the subsequent attachment of the oligosaccharide to the alpha-1,6 position. The sequence is that of 1,4-alpha-glucan branching enzyme GlgB from Corynebacterium diphtheriae (strain ATCC 700971 / NCTC 13129 / Biotype gravis).